The sequence spans 200 residues: NADH-quinone oxidoreductase subunit C (200 aa).

This sequence belongs to the complex I 30 kDa subunit family. In terms of assembly, NDH-1 is composed of 14 different subunits. Subunits NuoB, C, D, E, F, and G constitute the peripheral sector of the complex.

The protein localises to the cell inner membrane. The enzyme catalyses a quinone + NADH + 5 H(+)(in) = a quinol + NAD(+) + 4 H(+)(out). Its function is as follows. NDH-1 shuttles electrons from NADH, via FMN and iron-sulfur (Fe-S) centers, to quinones in the respiratory chain. The immediate electron acceptor for the enzyme in this species is believed to be ubiquinone. Couples the redox reaction to proton translocation (for every two electrons transferred, four hydrogen ions are translocated across the cytoplasmic membrane), and thus conserves the redox energy in a proton gradient. The protein is NADH-quinone oxidoreductase subunit C of Parvibaculum lavamentivorans (strain DS-1 / DSM 13023 / NCIMB 13966).